A 205-amino-acid polypeptide reads, in one-letter code: LexA repressor (205 aa).

Positions 28-48 (VREIGEAVGLASSSTVHGHLA) form a DNA-binding region, H-T-H motif. Active-site for autocatalytic cleavage activity residues include serine 127 and lysine 165.

The protein belongs to the peptidase S24 family. In terms of assembly, homodimer. In terms of processing, following treatment with mitomycin C protein levels begin to decrease after a 5-min lag and do not return to their original levels for at least 90 minutes.

It carries out the reaction Hydrolysis of Ala-|-Gly bond in repressor LexA.. Functionally, represses dinA, dinB, dinC, recA genes and itself by binding to the 14 bp palindromic sequence 5'-CGAACNNNNGTTCG-3'; some genes have a tandem consensus sequence and their binding is cooperative. In the presence of single-stranded DNA, RecA interacts with LexA causing an autocatalytic cleavage which disrupts the DNA-binding part of LexA, leading to derepression of the SOS regulon and eventually DNA repair; autocleavage is maximal at pH 11 in the absence of RecA and ssDNA. The polypeptide is LexA repressor (Bacillus subtilis (strain 168)).